Consider the following 73-residue polypeptide: uncharacterized protein (73 aa).

Residues 37 to 57 (AIIITVAVVAFGALTLGAIGA) form a helical membrane-spanning segment.

It is found in the membrane. This is an uncharacterized protein from Natronomonas pharaonis (strain ATCC 35678 / DSM 2160 / CIP 103997 / JCM 8858 / NBRC 14720 / NCIMB 2260 / Gabara) (Halobacterium pharaonis).